Reading from the N-terminus, the 126-residue chain is uncharacterized protein (126 aa).

2 disordered regions span residues 15 to 72 and 93 to 126; these read PEWG…SDPQ and TQIP…TTSN. 2 stretches are compositionally biased toward basic and acidic residues: residues 29–46 and 55–64; these read DPLD…RVPE and VQEDSREHGQ.

This is an uncharacterized protein from Homo sapiens (Human).